Consider the following 379-residue polypeptide: Chorismate synthase (379 aa).

Residues Arg-48 and Arg-54 each contribute to the NADP(+) site. FMN-binding positions include Arg-125–Ser-127, Asn-241–Ala-242, Gly-286, Lys-301–Ser-305, and Arg-327.

This sequence belongs to the chorismate synthase family. Homotetramer. Requires FMNH2 as cofactor.

It carries out the reaction 5-O-(1-carboxyvinyl)-3-phosphoshikimate = chorismate + phosphate. It functions in the pathway metabolic intermediate biosynthesis; chorismate biosynthesis; chorismate from D-erythrose 4-phosphate and phosphoenolpyruvate: step 7/7. Its function is as follows. Catalyzes the anti-1,4-elimination of the C-3 phosphate and the C-6 proR hydrogen from 5-enolpyruvylshikimate-3-phosphate (EPSP) to yield chorismate, which is the branch point compound that serves as the starting substrate for the three terminal pathways of aromatic amino acid biosynthesis. This reaction introduces a second double bond into the aromatic ring system. The chain is Chorismate synthase from Rhodospirillum centenum (strain ATCC 51521 / SW).